The sequence spans 373 residues: SWI/SNF-related matrix-associated actin-dependent regulator of chromatin subfamily B member 1 (373 aa).

The segment at 1–101 (MALSKAFGQK…DEKYKAVSIS (101 aa)) is DNA-binding.

Belongs to the SNF5 family. As to quaternary structure, component of the multiprotein chromatin-remodeling complexes SWI/SNF. Component of neural progenitors-specific chromatin remodeling complex (npBAF complex) and the neuron-specific chromatin remodeling complex (nBAF complex). Component of the BAF (SWI/SNF) chromatin remodeling complex. Component of the SWI/SNF-B (PBAF) chromatin remodeling complex. Binds to double-stranded DNA.

The protein localises to the nucleus. In terms of biological role, involved in chromatin-remodeling. Core component of the BAF (SWI/SNF) complex. This ATP-dependent chromatin-remodeling complex plays important roles in cell proliferation and differentiation, in cellular antiviral activities and inhibition of tumor formation. Belongs to the neural progenitors-specific chromatin remodeling complex (npBAF complex) and the neuron-specific chromatin remodeling complex (nBAF complex) and may play a role in neural development. The sequence is that of SWI/SNF-related matrix-associated actin-dependent regulator of chromatin subfamily B member 1 (smarcb1) from Dichotomyctere fluviatilis (Green pufferfish).